Here is a 149-residue protein sequence, read N- to C-terminus: SKP1-like protein 14 (149 aa).

The interval 91-149 is interaction with the F-box domain of F-box proteins; that stretch reads LLAANYLNIKGLLDLSAQTVADRIKDKTPEEIREIFNIENDFTPEEEAAVRKENAWAFE.

This sequence belongs to the SKP1 family. Part of a SCF (SKP1-cullin-F-box) protein ligase complex. Interacts with CPR1/CPR30, At3g61590, At4g39550 and At5g49610. In terms of tissue distribution, restricted to inflorescences, pollen and leaves.

It is found in the nucleus. It functions in the pathway protein modification; protein ubiquitination. Its function is as follows. Involved in ubiquitination and subsequent proteasomal degradation of target proteins. Together with CUL1, RBX1 and a F-box protein, it forms a SCF E3 ubiquitin ligase complex. The functional specificity of this complex depends on the type of F-box protein. In the SCF complex, it serves as an adapter that links the F-box protein to CUL1. This Arabidopsis thaliana (Mouse-ear cress) protein is SKP1-like protein 14 (ASK14).